The chain runs to 77 residues: MWHLKLFAVLVICLLLAVQVHGSPIPELSSAKRRPRRMTPFWRAVSLRPIGASCRDDSECLTRLCRKRRCSLSVAQE.

A signal peptide spans 1–22 (MWHLKLFAVLVICLLLAVQVHG). Residues 23 to 37 (SPIPELSSAKRRPRR) constitute a propeptide that is removed on maturation. 2 disulfide bridges follow: C54–C65 and C60–C70.

This sequence belongs to the LEAP2 family.

It localises to the secreted. Functionally, has an antimicrobial activity. The sequence is that of Liver-expressed antimicrobial peptide 2 (LEAP2) from Sus scrofa (Pig).